Here is a 476-residue protein sequence, read N- to C-terminus: Argininosuccinate lyase (476 aa).

It belongs to the lyase 1 family. Argininosuccinate lyase subfamily.

Its subcellular location is the cytoplasm. It catalyses the reaction 2-(N(omega)-L-arginino)succinate = fumarate + L-arginine. Its pathway is amino-acid biosynthesis; L-arginine biosynthesis; L-arginine from L-ornithine and carbamoyl phosphate: step 3/3. The chain is Argininosuccinate lyase from Gluconacetobacter diazotrophicus (strain ATCC 49037 / DSM 5601 / CCUG 37298 / CIP 103539 / LMG 7603 / PAl5).